The chain runs to 950 residues: Oxysterol-binding protein-related protein 1 (950 aa).

The segment at 1–237 is interaction with RAB7A; sequence MNTEAEQQLL…NKVIYKALKR (237 aa). ANK repeat units lie at residues 47–76, 80–109, and 175–204; these read LGWTPLHLACYFGHRQVVQDLLKAGAEVNV, MGDTPLHRAAFTGRKELVMLLLEYNADTTI, and LGNTPLHCAAYRAHKQCALKLLRSGADPNL. Residues 235-334 form the PH domain; the sequence is LKRYEGPLWK…WLEAIEEHSA (100 aa). Residues 430 to 463 adopt a coiled-coil conformation; the sequence is NFKLEQEQEKNKILSEALETLATEHHELEQSLVK. The FFAT motif lies at 469 to 485; that stretch reads SILSEDEFYDALSDSES. Residue Ser-499 is modified to Phosphoserine. Residues 501 to 521 show a composition bias toward basic and acidic residues; the sequence is EEEGEHLGSRKHRMSEEKDCG. Disordered stretches follow at residues 501–527, 795–816, and 881–913; these read EEEGEHLGSRKHRMSEEKDCGGGDALS, KKNTEEKKNSKQMSTSEELDEM, and MENGEIDQASEEKKRLEEKQRAARKNRSKSEED. The stretch at 877–913 forms a coiled coil; sequence DIRAMENGEIDQASEEKKRLEEKQRAARKNRSKSEED. Over residues 890-901 the composition is skewed to basic and acidic residues; the sequence is SEEKKRLEEKQR.

It belongs to the OSBP family. As to quaternary structure, interacts (via FFAT motif) with VAPA and VAPB. Interacts with the GTP-bound form of RAB7A. Interacts with OAS1B. Interacts (via FFAT motif) with MOSPD2 (via MSP domain).

It localises to the late endosome. Binds phospholipids; exhibits strong binding to phosphatidic acid and weak binding to phosphatidylinositol 3-phosphate. Stabilizes GTP-bound RAB7A on late endosomes/lysosomes and alters functional properties of late endocytic compartments via its interaction with RAB7A. Binds 25-hydroxycholesterol and cholesterol. The protein is Oxysterol-binding protein-related protein 1 of Homo sapiens (Human).